Consider the following 99-residue polypeptide: Putative septation protein SpoVG (99 aa).

Belongs to the SpoVG family.

Functionally, could be involved in septation. The protein is Putative septation protein SpoVG of Onion yellows phytoplasma (strain OY-M).